Reading from the N-terminus, the 1545-residue chain is MLEKFCNSTFWNSSFLDSPEADLPLCFEQTVLVWIPLGYLWLLAPWQLLHVYKSRTKRSSTTKLYLAKQVFVGFLLILAAIELALVLTEDSGQATVPAVRYTNPSLYLGTWLLVLLIQYSRQWCVQKNSWFLSLFWILSILCGTFQFQTLIRTLLQGDNSNLAYSCLFFISYGFQILILIFSAFSENNESSNNPSSIASFLSSITYSWYDSIILKGYKRPLTLEDVWEVDEEMKTKTLVSKFETHMKRELQKARRALQRRQEKSSQQNSGARLPGLNKNQSQSQDALVLEDVEKKKKKSGTKKDVPKSWLMKALFKTFYMVLLKSFLLKLVNDIFTFVSPQLLKLLISFASDRDTYLWIGYLCAILLFTAALIQSFCLQCYFQLCFKLGVKVRTAIMASVYKKALTLSNLARKEYTVGETVNLMSVDAQKLMDVTNFMHMLWSSVLQIVLSIFFLWRELGPSVLAGVGVMVLVIPINAILSTKSKTIQVKNMKNKDKRLKIMNEILSGIKILKYFAWEPSFRDQVQNLRKKELKNLLAFSQLQCVVIFVFQLTPVLVSVVTFSVYVLVDSNNILDAQKAFTSITLFNILRFPLSMLPMMISSMLQASVSTERLEKYLGGDDLDTSAIRHDCNFDKAMQFSEASFTWEHDSEATVRDVNLDIMAGQLVAVIGPVGSGKSSLISAMLGEMENVHGHITIKGTTAYVPQQSWIQNGTIKDNILFGTEFNEKRYQQVLEACALLPDLEMLPGGDLAEIGEKGINLSGGQKQRISLARATYQNLDIYLLDDPLSAVDAHVGKHIFNKVLGPNGLLKGKTRLLVTHSMHFLPQVDEIVVLGNGTIVEKGSYSALLAKKGEFAKNLKTFLRHTGPEEEATVHDGSEEEDDDYGLISSVEEIPEDAASITMRRENSFRRTLSRSSRSNGRHLKSLRNSLKTRNVNSLKEDEELVKGQKLIKKEFIETGKVKFSIYLEYLQAIGLFSIFFIILAFVMNSVAFIGSNLWLSAWTSDSKIFNSTDYPASQRDMRVGVYGALGLAQGIFVFIAHFWSAFGFVHASNILHKQLLNNILRAPMRFFDTTPTGRIVNRFAGDISTVDDTLPQSLRSWITCFLGIISTLVMICMATPVFTIIVIPLGIIYVSVQMFYVSTSRQLRRLDSVTRSPIYSHFSETVSGLPVIRAFEHQQRFLKHNEVRIDTNQKCVFSWITSNRWLAIRLELVGNLTVFFSALMMVIYRDTLSGDTVGFVLSNALNITQTLNWLVRMTSEIETNIVAVERITEYTKVENEAPWVTDKRPPPDWPSKGKIQFNNYQVRYRPELDLVLRGITCDIGSMEKIGVVGRTGAGKSSLTNCLFRILEAAGGQIIIDGVDIASIGLHDLREKLTIIPQDPILFSGSLRMNLDPFNNYSDEEIWKALELAHLKSFVASLQLGLSHEVTEAGGNLSIGQRQLLCLGRALLRKSKILVLDEATAAVDLETDNLIQTTIQNEFAHCTVITIAHRLHTIMDSDKVMVLDNGKIIECGSPEELLQIPGPFYFMAKEAGIENVNSTKF.

Residues 1–27 (MLEKFCNSTFWNSSFLDSPEADLPLCF) are Extracellular-facing. 2 N-linked (GlcNAc...) asparagine glycosylation sites follow: asparagine 7 and asparagine 12. The chain crosses the membrane as a helical span at residues 28–48 (EQTVLVWIPLGYLWLLAPWQL). Residues 49–68 (LHVYKSRTKRSSTTKLYLAK) lie on the Cytoplasmic side of the membrane. Residues 69-89 (QVFVGFLLILAAIELALVLTE) traverse the membrane as a helical segment. The Extracellular portion of the chain corresponds to 90-93 (DSGQ). Residues 94 to 114 (ATVPAVRYTNPSLYLGTWLLV) traverse the membrane as a helical segment. Topologically, residues 115–126 (LLIQYSRQWCVQ) are cytoplasmic. A helical membrane pass occupies residues 127-147 (KNSWFLSLFWILSILCGTFQF). Residues 148–165 (QTLIRTLLQGDNSNLAYS) are Extracellular-facing. Residues 166–186 (CLFFISYGFQILILIFSAFSE) traverse the membrane as a helical segment. Over 187-313 (NNESSNNPSS…DVPKSWLMKA (127 aa)) the chain is Cytoplasmic. Positions 253-284 (ARRALQRRQEKSSQQNSGARLPGLNKNQSQSQ) are disordered. 2 positions are modified to phosphoserine: serine 281 and serine 283. Residues 314-334 (LFKTFYMVLLKSFLLKLVNDI) form a helical membrane-spanning segment. Positions 322–605 (LLKSFLLKLV…LPMMISSMLQ (284 aa)) constitute an ABC transmembrane type-1 1 domain. Over 335–360 (FTFVSPQLLKLLISFASDRDTYLWIG) the chain is Extracellular. A helical membrane pass occupies residues 361-381 (YLCAILLFTAALIQSFCLQCY). Residues 382–437 (FQLCFKLGVKVRTAIMASVYKKALTLSNLARKEYTVGETVNLMSVDAQKLMDVTNF) lie on the Cytoplasmic side of the membrane. Residues 438–458 (MHMLWSSVLQIVLSIFFLWRE) form a helical membrane-spanning segment. Topologically, residues 459–461 (LGP) are extracellular. Residues 462–482 (SVLAGVGVMVLVIPINAILST) form a helical membrane-spanning segment. The Cytoplasmic portion of the chain corresponds to 483 to 544 (KSKTIQVKNM…NLLAFSQLQC (62 aa)). Residues 545 to 565 (VVIFVFQLTPVLVSVVTFSVY) form a helical membrane-spanning segment. Topologically, residues 566–587 (VLVDSNNILDAQKAFTSITLFN) are extracellular. The helical transmembrane segment at 588–608 (ILRFPLSMLPMMISSMLQASV) threads the bilayer. Residues 609-971 (STERLEKYLG…VKFSIYLEYL (363 aa)) lie on the Cytoplasmic side of the membrane. Residues 637-861 (MQFSEASFTW…KGEFAKNLKT (225 aa)) enclose the ABC transporter 1 domain. 671 to 678 (GPVGSGKS) is a binding site for ATP. Serine 878, serine 926, serine 930, and serine 938 each carry phosphoserine. A helical transmembrane segment spans residues 972-992 (QAIGLFSIFFIILAFVMNSVA). One can recognise an ABC transmembrane type-1 2 domain in the interval 979 to 1264 (IFFIILAFVM…LVRMTSEIET (286 aa)). At 993–1033 (FIGSNLWLSAWTSDSKIFNSTDYPASQRDMRVGVYGALGLA) the chain is on the extracellular side. Asparagine 1011 carries N-linked (GlcNAc...) asparagine glycosylation. A helical transmembrane segment spans residues 1034-1054 (QGIFVFIAHFWSAFGFVHASN). The Cytoplasmic segment spans residues 1055 to 1097 (ILHKQLLNNILRAPMRFFDTTPTGRIVNRFAGDISTVDDTLPQ). Residues 1098–1118 (SLRSWITCFLGIISTLVMICM) traverse the membrane as a helical segment. A topological domain (extracellular) is located at residue alanine 1119. Residues 1120-1140 (TPVFTIIVIPLGIIYVSVQMF) form a helical membrane-spanning segment. Residues 1141-1211 (YVSTSRQLRR…TSNRWLAIRL (71 aa)) are Cytoplasmic-facing. The chain crosses the membrane as a helical span at residues 1212-1232 (ELVGNLTVFFSALMMVIYRDT). Over 1233–1234 (LS) the chain is Extracellular. Residues 1235–1255 (GDTVGFVLSNALNITQTLNWL) traverse the membrane as a helical segment. Residues 1256–1545 (VRMTSEIETN…GIENVNSTKF (290 aa)) lie on the Cytoplasmic side of the membrane. Residues 1300–1534 (IQFNNYQVRY…PGPFYFMAKE (235 aa)) form the ABC transporter 2 domain. 1334–1341 (GRTGAGKS) contributes to the ATP binding site. Position 1438 is a phosphoserine (serine 1438).

Belongs to the ABC transporter superfamily. ABCC family. Conjugate transporter (TC 3.A.1.208) subfamily. In terms of tissue distribution, expressed by polarized cells in liver, kidney and intestine. The highest expression is found in liver. Expressed in small intestine.

Its subcellular location is the apical cell membrane. The catalysed reaction is ATP + H2O + xenobioticSide 1 = ADP + phosphate + xenobioticSide 2.. The enzyme catalyses an S-substituted glutathione(in) + ATP + H2O = an S-substituted glutathione(out) + ADP + phosphate + H(+). It carries out the reaction taurolithocholate 3-sulfate(in) + ATP + H2O = taurolithocholate 3-sulfate(out) + ADP + phosphate + H(+). It catalyses the reaction leukotriene C4(in) + ATP + H2O = leukotriene C4(out) + ADP + phosphate + H(+). The catalysed reaction is 17beta-estradiol 17-O-(beta-D-glucuronate)(in) + ATP + H2O = 17beta-estradiol 17-O-(beta-D-glucuronate)(out) + ADP + phosphate + H(+). The enzyme catalyses (4Z,15Z)-bilirubin IXalpha C8-beta-D-glucuronoside(in) + ATP + H2O = (4Z,15Z)-bilirubin IXalpha C8-beta-D-glucuronoside(out) + ADP + phosphate + H(+). It carries out the reaction (4Z,15Z)-bilirubin IXalpha C8,C12-beta-D-bisglucuronoside(in) + ATP + H2O = (4Z,15Z)-bilirubin IXalpha C8,C12-beta-D-bisglucuronoside(out) + ADP + phosphate + H(+). Its function is as follows. ATP-dependent transporter of the ATP-binding cassette (ABC) family that binds and hydrolyzes ATP to enable active transport of various substrates including many drugs, toxicants and endogenous compound across cell membranes. Transports a wide variety of conjugated organic anions such as sulfate-, glucuronide- and glutathione (GSH)-conjugates of endo- and xenobiotics substrates. Mediates hepatobiliary excretion of mono- and bis-glucuronidated bilirubin molecules and therefore play an important role in bilirubin detoxification. Also mediates hepatobiliary excretion of others glucuronide conjugates such as 17beta-estradiol 17-glucosiduronic acid and leukotriene C4. Transports sulfated bile salt such as taurolithocholate sulfate. Transports various anticancer drugs, such as anthracycline, vinca alkaloid and methotrexate and HIV-drugs such as protease inhibitors. Confers resistance to several anti-cancer drugs including cisplatin, doxorubicin, epirubicin, methotrexate, etoposide and vincristine. The chain is ATP-binding cassette sub-family C member 2 from Homo sapiens (Human).